The chain runs to 223 residues: Ribonuclease 3 (223 aa).

Positions 4–127 constitute an RNase III domain; sequence YSQLEKRLNY…IIGAVYLEAG (124 aa). Glu-40 provides a ligand contact to Mg(2+). The active site involves Asp-44. The Mg(2+) site is built by Asn-113 and Glu-116. Glu-116 is a catalytic residue. Positions 154 to 223 constitute a DRBM domain; the sequence is DYKTALQELT…AKIALEALKK (70 aa).

It belongs to the ribonuclease III family. Homodimer. Mg(2+) serves as cofactor.

It localises to the cytoplasm. The enzyme catalyses Endonucleolytic cleavage to 5'-phosphomonoester.. Digests double-stranded RNA. Involved in the processing of primary rRNA transcript to yield the immediate precursors to the large and small rRNAs (23S and 16S). Processes some mRNAs, and tRNAs when they are encoded in the rRNA operon. Processes pre-crRNA and tracrRNA of type II CRISPR loci if present in the organism. This Sulfurovum sp. (strain NBC37-1) protein is Ribonuclease 3.